The sequence spans 729 residues: Transcriptional activator ptaB (729 aa).

Residues 1–12 (MPQHPGLPPGHP) are compositionally biased toward pro residues. Disordered regions lie at residues 1–69 (MPQH…QAHA), 207–341 (AAAA…QNQA), 505–538 (LELS…SLPE), and 614–729 (RGPQ…KGTA). Over residues 38 to 56 (PGGPQVTQGGPMMGMPPGA) the composition is skewed to low complexity. Positions 272–285 (APQPHPTPNPPPQQ) are enriched in pro residues. Composition is skewed to low complexity over residues 286 to 300 (LPQA…HQQP) and 307 to 341 (QPQQ…QNQA). Residues 614-625 (RGPQMNGPNQFA) are compositionally biased toward polar residues. Residues 655 to 671 (GPPGMVQQGQMQPNVGQ) show a composition bias toward low complexity. A compositionally biased stretch (polar residues) spans 672–682 (ATSASASPQVT).

Belongs to the MFG1 family. Interacts with somA.

Its subcellular location is the nucleus. Its function is as follows. Transcriptional regulator that forms a complex with somA to control biofilm formation. This chain is Transcriptional activator ptaB, found in Aspergillus fumigatus (strain ATCC MYA-4609 / CBS 101355 / FGSC A1100 / Af293) (Neosartorya fumigata).